The chain runs to 208 residues: ATP-dependent Clp protease proteolytic subunit (208 aa).

Residue Ser112 is the Nucleophile of the active site. His137 is a catalytic residue.

It belongs to the peptidase S14 family. Fourteen ClpP subunits assemble into 2 heptameric rings which stack back to back to give a disk-like structure with a central cavity, resembling the structure of eukaryotic proteasomes.

It localises to the cytoplasm. It carries out the reaction Hydrolysis of proteins to small peptides in the presence of ATP and magnesium. alpha-casein is the usual test substrate. In the absence of ATP, only oligopeptides shorter than five residues are hydrolyzed (such as succinyl-Leu-Tyr-|-NHMec, and Leu-Tyr-Leu-|-Tyr-Trp, in which cleavage of the -Tyr-|-Leu- and -Tyr-|-Trp bonds also occurs).. Cleaves peptides in various proteins in a process that requires ATP hydrolysis. Has a chymotrypsin-like activity. Plays a major role in the degradation of misfolded proteins. This chain is ATP-dependent Clp protease proteolytic subunit, found in Buchnera aphidicola subsp. Acyrthosiphon pisum (strain APS) (Acyrthosiphon pisum symbiotic bacterium).